Consider the following 84-residue polypeptide: Small ribosomal subunit protein uS17 (84 aa).

The protein belongs to the universal ribosomal protein uS17 family. As to quaternary structure, part of the 30S ribosomal subunit.

In terms of biological role, one of the primary rRNA binding proteins, it binds specifically to the 5'-end of 16S ribosomal RNA. This Borreliella burgdorferi (strain ATCC 35210 / DSM 4680 / CIP 102532 / B31) (Borrelia burgdorferi) protein is Small ribosomal subunit protein uS17.